A 550-amino-acid polypeptide reads, in one-letter code: uncharacterized protein (550 aa).

Positions 1 to 13 are cleaved as a signal peptide; sequence MAGALFEPSFAAA. The segment at 312–358 is disordered; the sequence is DAQPDPHLSGDEPPSRPLTPETTLFEALTPDPEPDPPATHAPAELIT.

It to M.tuberculosis Rv3776.

This is an uncharacterized protein from Mycobacterium tuberculosis (strain CDC 1551 / Oshkosh).